Here is a 156-residue protein sequence, read N- to C-terminus: Small ribosomal subunit protein uS7 (156 aa).

Belongs to the universal ribosomal protein uS7 family. In terms of assembly, part of the 30S ribosomal subunit. Contacts proteins S9 and S11.

Its function is as follows. One of the primary rRNA binding proteins, it binds directly to 16S rRNA where it nucleates assembly of the head domain of the 30S subunit. Is located at the subunit interface close to the decoding center, probably blocks exit of the E-site tRNA. This chain is Small ribosomal subunit protein uS7, found in Blochmanniella pennsylvanica (strain BPEN).